Consider the following 562-residue polypeptide: Laccase-2 (562 aa).

Residues 1–26 form the signal peptide; sequence MASAASSLPLLVSSLLLALFALGAHA. 2 Plastocyanin-like domains span residues 34–150 and 160–312; these read DIVM…PAAG and DEAE…YAGV. 4 N-linked (GlcNAc...) asparagine glycosylation sites follow: N39, N53, N72, and N80. Residues H84 and H86 each contribute to the Cu cation site. N-linked (GlcNAc...) asparagine glycosylation is present at N118. Positions 129 and 131 each coordinate Cu cation. N-linked (GlcNAc...) asparagine glycosylation is found at N189, N244, N300, N328, N376, N386, N421, and N445. The Plastocyanin-like 3 domain occupies 411–546; it reads DFPDRPPARF…KMAFLVEDGS (136 aa). Cu cation contacts are provided by H463, H466, H468, H525, C526, H527, and H531.

Belongs to the multicopper oxidase family. Cu cation serves as cofactor.

Its subcellular location is the secreted. It is found in the extracellular space. The protein localises to the apoplast. It carries out the reaction 4 hydroquinone + O2 = 4 benzosemiquinone + 2 H2O. Its function is as follows. Lignin degradation and detoxification of lignin-derived products. The protein is Laccase-2 (LAC2) of Oryza sativa subsp. japonica (Rice).